A 349-amino-acid chain; its full sequence is MLLSSLISLALLSSQVVADPAWAPPDKGLKPEVARLLPPFLRYRRPIYAIAHRVVTVGGIKDAISHGANAFEVDMCADSIGEGWWANHDCTNGRKAGDSARKIFETFAAERKRGKTVTFVWLDFKNPDACVKNQGCSIEAIQQLCRDILEKQGIRVLYGFYKAEDSRAFKTIRNNLNDREAISLNGATTKVLKLFEGTAPKVSKHQRVMDYGDTYLDKGFGDCTEKDWYTCTELRQGADLRRKGKLGKVFAWTSTVNQGRLVDQLLGKAHVDGIIYGFKLTDYYDHADSRAAANDIISWVKRRRALYYMATNDNNPWIDIHKLFLYLLSWFSCILLLMMNEWTCPQDGA.

Positions 1–18 (MLLSSLISLALLSSQVVA) are cleaved as a signal peptide. H52 is an active-site residue. Mg(2+)-binding residues include E72, D74, and D123. The SMD-tail signature appears at 310–317 (ATNDNNPW).

The protein belongs to the sphingomyelinase D/phospholipase D family. Mg(2+) is required as a cofactor.

The protein localises to the secreted. It catalyses the reaction a sphingomyelin + H2O = an N-acylsphing-4-enine 1-phosphate + choline + H(+). Functionally, catalyzes the hydrolysis of sphingomyelin. Sphingomyelinases D are produced by some spider in their venoms, but also by arthropods such as ticks, or pathogenic bacteria and fungi. They might play a role in pathogenicity through different mechanisms, such as membrane destabilization and host cell penetration, but also pulmonary inflammation and cutaneous lesions. The sequence is that of Sphingomyelinase D from Uncinocarpus reesii (strain UAMH 1704).